The primary structure comprises 298 residues: Probable 2-(5''-triphosphoribosyl)-3'-dephosphocoenzyme-A synthase (298 aa).

It belongs to the CitG/MdcB family.

The catalysed reaction is 3'-dephospho-CoA + ATP = 2'-(5''-triphospho-alpha-D-ribosyl)-3'-dephospho-CoA + adenine. This chain is Probable 2-(5''-triphosphoribosyl)-3'-dephosphocoenzyme-A synthase, found in Salmonella arizonae (strain ATCC BAA-731 / CDC346-86 / RSK2980).